A 273-amino-acid polypeptide reads, in one-letter code: Dermonecrotic toxin LdSicTox-alphaIB3aiii (273 aa).

Histidine 5 is a catalytic residue. Glutamate 25 and aspartate 27 together coordinate Mg(2+). The active-site Nucleophile is histidine 41. 2 cysteine pairs are disulfide-bonded: cysteine 45–cysteine 51 and cysteine 47–cysteine 190. Aspartate 85 lines the Mg(2+) pocket.

This sequence belongs to the arthropod phospholipase D family. Class II subfamily. Mg(2+) serves as cofactor. In terms of tissue distribution, expressed by the venom gland.

The protein localises to the secreted. The catalysed reaction is an N-(acyl)-sphingosylphosphocholine = an N-(acyl)-sphingosyl-1,3-cyclic phosphate + choline. The enzyme catalyses an N-(acyl)-sphingosylphosphoethanolamine = an N-(acyl)-sphingosyl-1,3-cyclic phosphate + ethanolamine. It carries out the reaction a 1-acyl-sn-glycero-3-phosphocholine = a 1-acyl-sn-glycero-2,3-cyclic phosphate + choline. It catalyses the reaction a 1-acyl-sn-glycero-3-phosphoethanolamine = a 1-acyl-sn-glycero-2,3-cyclic phosphate + ethanolamine. In terms of biological role, dermonecrotic toxins cleave the phosphodiester linkage between the phosphate and headgroup of certain phospholipids (sphingolipid and lysolipid substrates), forming an alcohol (often choline) and a cyclic phosphate. This toxin acts on sphingomyelin (SM). It may also act on ceramide phosphoethanolamine (CPE), lysophosphatidylcholine (LPC) and lysophosphatidylethanolamine (LPE), but not on lysophosphatidylserine (LPS), and lysophosphatidylglycerol (LPG). It acts by transphosphatidylation, releasing exclusively cyclic phosphate products as second products. Induces dermonecrosis, hemolysis, increased vascular permeability, edema, inflammatory response, and platelet aggregation. The chain is Dermonecrotic toxin LdSicTox-alphaIB3aiii from Loxosceles deserta (Desert recluse spider).